Here is a 91-residue protein sequence, read N- to C-terminus: UPF0250 protein PP_4802 (91 aa).

The protein belongs to the UPF0250 family.

The protein is UPF0250 protein PP_4802 of Pseudomonas putida (strain ATCC 47054 / DSM 6125 / CFBP 8728 / NCIMB 11950 / KT2440).